Consider the following 243-residue polypeptide: NAD(P)H-quinone oxidoreductase subunit K, chloroplastic (243 aa).

Residues C65, C66, C130, and C161 each coordinate [4Fe-4S] cluster.

This sequence belongs to the complex I 20 kDa subunit family. NDH is composed of at least 16 different subunits, 5 of which are encoded in the nucleus. [4Fe-4S] cluster serves as cofactor.

Its subcellular location is the plastid. The protein resides in the chloroplast thylakoid membrane. It carries out the reaction a plastoquinone + NADH + (n+1) H(+)(in) = a plastoquinol + NAD(+) + n H(+)(out). The enzyme catalyses a plastoquinone + NADPH + (n+1) H(+)(in) = a plastoquinol + NADP(+) + n H(+)(out). NDH shuttles electrons from NAD(P)H:plastoquinone, via FMN and iron-sulfur (Fe-S) centers, to quinones in the photosynthetic chain and possibly in a chloroplast respiratory chain. The immediate electron acceptor for the enzyme in this species is believed to be plastoquinone. Couples the redox reaction to proton translocation, and thus conserves the redox energy in a proton gradient. The protein is NAD(P)H-quinone oxidoreductase subunit K, chloroplastic of Marchantia polymorpha (Common liverwort).